Reading from the N-terminus, the 501-residue chain is Phytoene desaturase (lycopene-forming) (501 aa).

Ile12 to Gly45 lines the FAD pocket.

Belongs to the carotenoid/retinoid oxidoreductase family. FAD is required as a cofactor.

The enzyme catalyses 15-cis-phytoene + 4 A = all-trans-lycopene + 4 AH2. The protein operates within carotenoid biosynthesis; astaxanthin biosynthesis. This enzyme converts phytoene into lycopene via the intermediaries of phytofluene, zeta-carotene and neurosporene by the introduction of four double bonds. The protein is Phytoene desaturase (lycopene-forming) (crtI) of Paracoccus sp. (strain N81106 / MBIC 01143) (Agrobacterium aurantiacum).